The primary structure comprises 326 residues: Tagatose 1,6-diphosphate aldolase (326 aa).

The protein belongs to the aldolase LacD family.

It catalyses the reaction D-tagatofuranose 1,6-bisphosphate = D-glyceraldehyde 3-phosphate + dihydroxyacetone phosphate. The protein operates within carbohydrate metabolism; D-tagatose 6-phosphate degradation; D-glyceraldehyde 3-phosphate and glycerone phosphate from D-tagatose 6-phosphate: step 2/2. This is Tagatose 1,6-diphosphate aldolase from Staphylococcus aureus (strain MW2).